The following is a 268-amino-acid chain: Microtubule-associated protein RP/EB family member 1 (268 aa).

At Ala2 the chain carries N-acetylalanine. Residues 14–116 (NLSRHDMLAW…FVQWFKKFFD (103 aa)) form the Calponin-homology (CH) domain. Lys66 carries the post-translational modification N6-crotonyllysine. Tyr124 is modified (phosphotyrosine). Residues 124–268 (YDPVAARQGQ…GGPQEEQEEY (145 aa)) are interaction with MTUS2/TIP150. Residues 146–160 (LNKPKKPLSSSSAAP) are compositionally biased toward low complexity. The segment at 146–191 (LNKPKKPLSSSSAAPQRPISTQRTAAAPKAGPGVVRKNPGVGNGDD) is disordered. Phosphoserine is present on residues Ser155 and Ser165. An EB1 C-terminal domain is found at 185–255 (GVGNGDDEAA…LYATDEGFVI (71 aa)). The interaction with CDK5RAP2 stretch occupies residues 185–268 (GVGNGDDEAA…GGPQEEQEEY (84 aa)). The segment at 206–211 (TVEDLE) is interaction with APC. The interval 208 to 268 (EDLEKERDFY…GGPQEEQEEY (61 aa)) is DCTN1-binding. N6-acetyllysine is present on Lys220. The segment at 220 to 242 (KLRNIELICQENEGENDPVLQRI) is APC-binding. An interaction with SKA1 region spans residues 232-255 (EGENDPVLQRIVDILYATDEGFVI).

This sequence belongs to the MAPRE family. As to quaternary structure, homodimer. Heterodimer with MAPRE3. Interacts with DCTN1, DCTN2, TERF1 and dynein intermediate chain. Interaction with DIAPH1 and DIAPH2. Interacts (via C-terminal residues 206-211) with APC (via C-terminal residues 2674-2845); the interaction inhibits association with and bundling of F-actin. Interacts with CLASP2, DST, KIF2C and STIM1; probably required for their targeting to the growing microtubule plus ends. Interacts with MTUS2; interaction is direct and probably targets MTUS2 to microtubules. Interacts (via C-terminus) with SKA1 (via SXIP motif); the interaction is direct and stabilizes the kinetochore-microtubule attachment of the SKA1 complex. Interacts with APC2. Interacts with CLASP1. Interacts with CDK5RAP2. Interacts with MACF1. Interacts with RABL2/RABL2A; binds preferentially to GTP-bound RABL2. Interacts with KCNAB2. Interacts (via C-terminus) with CLIP1. Interacts with SLAIN2 and SLAIN1. Interacts with KIF18B; this interaction is required for efficient accumulation of KIF18B at microtubule plus ends. Interacts with MISP. Interacts with KNSTRN. Interacts with NCKAP5L. Interacts with CAMSAP2. Interacts with PDE4DIP isoform 13/MMG8/SMYLE; this interaction is required for its recruitment to the Golgi apparatus. Forms a pericentrosomal complex with AKAP9, CDK5RAP2 and PDE4DIP isoform 13/MMG8/SMYLE; within this complex, MAPRE1 binding to CDK5RAP2 may be mediated by PDE4DIP. Interacts with AKNA. Interacts with GAS2L1, GAS2L2, and GAS2L3. Interacts with RARRES1 and AGBL2. In terms of processing, acetylation at Lys-220 by KAT2B/PCAF promotes dynamic kinetochore-microtubule interactions in early mitosis. Post-translationally, crotonylated by KAT5 during mitosis, promoting astral microtubule plasticity and dynamic connection between astral microtubules and the cortex during mitotic chromosome segregation, thereby ensuring accurate spindle positioning in mitosis. Decrotonylated by HDAC3.

The protein localises to the cytoplasm. The protein resides in the cytoskeleton. It localises to the microtubule organizing center. It is found in the centrosome. Its subcellular location is the golgi apparatus. The protein localises to the spindle. The protein resides in the spindle pole. Functionally, plus-end tracking protein (+TIP) that binds to the plus-end of microtubules and regulates the dynamics of the microtubule cytoskeleton. Recruits other +TIP proteins to microtubules by binding to a conserved Ser-X-Leu-Pro (SXLP) motif in their polypeptide chains. Promotes cytoplasmic microtubule nucleation and elongation. Involved in mitotic spindle positioning by stabilizing microtubules and promoting dynamic connection between astral microtubules and the cortex during mitotic chromosome segregation. Assists chromosome alignment in metaphase by recruiting the SKA complex to the spindle and stabilizing its interactions with microtubule bundles (K-fibers). Also acts as a regulator of minus-end microtubule organization: interacts with the complex formed by AKAP9 and PDE4DIP, leading to recruit CAMSAP2 to the Golgi apparatus, thereby tethering non-centrosomal minus-end microtubules to the Golgi, an important step for polarized cell movement. Promotes elongation of CAMSAP2-decorated microtubule stretches on the minus-end of microtubules. Acts as a regulator of autophagosome transport via interaction with CAMSAP2. Functions downstream of Rho GTPases and DIAPH1 in stable microtubule formation. May play a role in cell migration. In Pongo abelii (Sumatran orangutan), this protein is Microtubule-associated protein RP/EB family member 1 (MAPRE1).